Here is a 377-residue protein sequence, read N- to C-terminus: Chaperone MoxR1 (377 aa).

Residues 1-33 (MTSAGGFPAGAGGYQTPGGHSASPAHEAPPGGA) form a disordered region. The span at 7–16 (FPAGAGGYQT) shows a compositional bias: gly residues. Over residues 19 to 33 (GHSASPAHEAPPGGA) the composition is skewed to low complexity. ATP is bound at residue 78–85 (GVPGVAKT).

It belongs to the MoxR family. Interacts with RipA. Interacts with host Toll-like receptor 4 (TLR4).

Functionally, displays ATP-enhanced chaperone activity. Required for the proper folding of the peptidoglycan endopeptidase RipA and its secretion through the TAT secretion system. In vitro, prevents thermal aggregation of MalZ protein and protects the functional activity of the restriction enzyme NdeI from thermal inactivation. Its function is as follows. Could be a moonlighting protein that uses a multipronged approach to dampen host-directed immunity for efficient replication, survival and pathogenesis. Can enhance virulence by inhibiting autophagy and apoptosis, and disrupting cellular bioenergetics. Binds and activates host TLR4 on the surface of macrophage cells, leading to the activation of the host NFKB and MAPK signaling cascades and enhanced secretion of proinflammatory cytokines. Inhibits autophagic flux via activation of PI3K-AKT-MTOR-ULK1 signaling cascade and represses apoptosis via inhibiting protooncogene c-FOS and MAPK JNK1/2. Also induces robust disruption of cellular bioenergetics by metabolic reprogramming to rewire the citric acid cycle intermediates for its benefit. In Mycobacterium tuberculosis (strain ATCC 25618 / H37Rv), this protein is Chaperone MoxR1.